The sequence spans 203 residues: Thymidylate kinase (203 aa).

7 to 14 (GGEGAGKT) contacts ATP.

This sequence belongs to the thymidylate kinase family.

The enzyme catalyses dTMP + ATP = dTDP + ADP. Its function is as follows. Phosphorylation of dTMP to form dTDP in both de novo and salvage pathways of dTTP synthesis. This chain is Thymidylate kinase (tmk), found in Chlamydia trachomatis serovar D (strain ATCC VR-885 / DSM 19411 / UW-3/Cx).